We begin with the raw amino-acid sequence, 105 residues long: Thioredoxin (105 aa).

The region spanning 1-105 (MVNNVTDSSF…SLLDWINKSI (105 aa)) is the Thioredoxin domain. Cysteine 30 and cysteine 33 are disulfide-bonded.

Belongs to the thioredoxin family.

Functionally, component of the thioredoxin-thioredoxin reductase system. Participates in various redox reactions through the reversible oxidation of its active center dithiol to a disulfide and catalyzes dithiol-disulfide exchange reactions. This is Thioredoxin (trxA) from Rickettsia prowazekii (strain Madrid E).